The sequence spans 183 residues: Ribosome rescue factor SmrB (183 aa).

The region spanning 98–173 (LDLHGLTQLQ…GDAALLVLIE (76 aa)) is the Smr domain.

Belongs to the SmrB family. Associates with collided ribosomes, but not with correctly translating polysomes.

In terms of biological role, acts as a ribosome collision sensor. Detects stalled/collided disomes (pairs of ribosomes where the leading ribosome is stalled and a second ribosome has collided with it) and endonucleolytically cleaves mRNA at the 5' boundary of the stalled ribosome. Stalled/collided disomes form a new interface (primarily via the 30S subunits) that binds SmrB. Cleaved mRNA becomes available for tmRNA ligation, leading to ribosomal subunit dissociation and rescue of stalled ribosomes. The chain is Ribosome rescue factor SmrB from Escherichia coli O7:K1 (strain IAI39 / ExPEC).